Consider the following 319-residue polypeptide: sn-1-specific diacylglycerol lipase ABHD11 (319 aa).

A mitochondrion-targeting transit peptide spans 1–28 (MTLKLAVLRQIFQGSKGWHLWQHWRAFY). Residues 69–304 (PPLVLLHGLF…GAGHWVHADK (236 aa)) form the AB hydrolase-1 domain. Active-site charge relay system residues include Ser143, Glu239, and His298.

This sequence belongs to the AB hydrolase superfamily. Post-translationally, phosphorylated.

The protein localises to the mitochondrion. It is found in the mitochondrion matrix. The catalysed reaction is 1-octadecanoyl-2-(5Z,8Z,11Z,14Z-eicosatetraenoyl)-sn-glycerol + H2O = 2-(5Z,8Z,11Z,14Z-eicosatetraenoyl)-glycerol + octadecanoate + H(+). The enzyme catalyses a 1,2-diacyl-sn-glycerol + H2O = a 2-acylglycerol + a fatty acid + H(+). It catalyses the reaction a 1,3-diacyl-sn-glycerol + H2O = a 1-acyl-sn-glycerol + a fatty acid + H(+). It carries out the reaction 1-octadecanoyl-2-(9Z-octadecenoyl)-sn-glycerol + H2O = 2-(9Z-octadecenoyl)-glycerol + octadecanoate + H(+). The catalysed reaction is 1-octadecanoyl-2-(4Z,7Z,10Z,13Z,16Z,19Z-docosahexaenoyl)-sn-glycerol + H2O = 2-(4Z,7Z,10Z,13Z,16Z,19Z-docosahexaenoyl)-glycerol + octadecanoate + H(+). The enzyme catalyses 1,2-didecanoylglycerol + H2O = decanoylglycerol + decanoate + H(+). In terms of biological role, catalyzes the hydrolysis of diacylglycerol in vitro and may function as a key regulator in lipid metabolism, namely by regulating the intracellular levels of diacylglycerol. 1,2-diacyl-sn-glycerols are the preferred substrate over 1,3-diacyl-sn-glycerols. The enzyme hydrolyzes stearate in preference to palmitate from the sn-1 position of 1,2-diacyl-sn-glycerols. This Xenopus tropicalis (Western clawed frog) protein is sn-1-specific diacylglycerol lipase ABHD11.